The chain runs to 145 residues: MFQFQFPLYNDIVEQARREAVEAGFEELRTPEDVDAAFRRPGTTLVLINSVCGCAGGIARPAAAHAVHYDKRPDHLVTVFAGQDKEATARAREYFVGEPPSSPSFALLKDGKLCAMLHRHDIEGHEPVAVVQKLQALFDEYCEEV.

This sequence belongs to the bacilliredoxin family.

The chain is Bacilliredoxin GK2368 from Geobacillus kaustophilus (strain HTA426).